The sequence spans 114 residues: Class I hydrophobin SC16 (114 aa).

The N-terminal stretch at 1-17 (MRFFATLVLALPALAMA) is a signal peptide. Intrachain disulfides connect Cys33-Cys93, Cys40-Cys87, Cys41-Cys74, and Cys94-Cys107. Asn42 carries N-linked (GlcNAc...) asparagine glycosylation.

This sequence belongs to the fungal hydrophobin family. In terms of assembly, self-assembles to form functional amyloid fibrils called rodlets. Self-assembly into fibrillar rodlets occurs spontaneously at hydrophobic:hydrophilic interfaces and the rodlets further associate laterally to form amphipathic monolayers.

Its subcellular location is the secreted. The protein localises to the cell wall. Functionally, aerial growth, conidiation, and dispersal of filamentous fungi in the environment rely upon a capability of their secreting small amphipathic proteins called hydrophobins (HPBs) with low sequence identity. Class I can self-assemble into an outermost layer of rodlet bundles on aerial cell surfaces, conferring cellular hydrophobicity that supports fungal growth, development and dispersal; whereas Class II form highly ordered films at water-air interfaces through intermolecular interactions but contribute nothing to the rodlet structure. This chain is Class I hydrophobin SC16, found in Schizophyllum commune (strain H4-8 / FGSC 9210) (Split gill fungus).